The chain runs to 29 residues: Cyclotide vibi-B (29 aa).

A cross-link (cyclopeptide (Gly-Asn)) is located at residues 1 to 29; the sequence is GLPVCGETCFGGTCNTPGCTCSYPICTRN. 3 cysteine pairs are disulfide-bonded: cysteine 5-cysteine 19, cysteine 9-cysteine 21, and cysteine 14-cysteine 26.

In terms of processing, this is a cyclic peptide.

Probably participates in a plant defense mechanism. The polypeptide is Cyclotide vibi-B (Viola biflora (Yellow wood violet)).